The chain runs to 293 residues: uncharacterized protein (293 aa).

2 disordered regions span residues 1 to 114 (MFLR…IPKL) and 268 to 293 (EETA…GRML). Phosphoserine is present on residues S34, S35, and S89. Composition is skewed to basic and acidic residues over residues 73-95 (SSRD…RDKT) and 277-293 (GQER…GRML).

This is an uncharacterized protein from Mus musculus (Mouse).